The sequence spans 86 residues: UPF0367 protein NATL1_01981 (86 aa).

The protein belongs to the UPF0367 family.

This is UPF0367 protein NATL1_01981 from Prochlorococcus marinus (strain NATL1A).